Consider the following 472-residue polypeptide: Probable dipeptidase A (472 aa).

Residue Cys10 is part of the active site.

The protein belongs to the peptidase C69 family.

The catalysed reaction is an L-aminoacyl-L-amino acid + H2O = 2 an L-alpha-amino acid. The chain is Probable dipeptidase A (pepDA) from Streptococcus pyogenes serotype M18 (strain MGAS8232).